A 389-amino-acid chain; its full sequence is Putative nickel insertion protein (389 aa).

Belongs to the LarC family.

The sequence is that of Putative nickel insertion protein from Desulfotalea psychrophila (strain LSv54 / DSM 12343).